We begin with the raw amino-acid sequence, 261 residues long: MNYFRVKIAYKGTHYFGWQAQSIDTLHEEKPTVEGTILNALKKITNYQPCTVSGASRTDGGVHARGQIAKITISQKISPEHLLLGLNSLLPTDIRILECVPSTKEYQASRGSVSKEYHYYFIASPVDNVATSDIALHLPIDSIGPDDLALLRSACRLFVGRHDFYNFSSRGSGTSFREIFYCDIHRANFSPLANDMFYLKIIGDGFLKYMIRYIMGALLELVRGRIVLDDISLYLQQHQEDKLSPRAKAKGLHLIRIEGPK.

Aspartate 59 serves as the catalytic Nucleophile. Tyrosine 117 contributes to the substrate binding site.

This sequence belongs to the tRNA pseudouridine synthase TruA family. Homodimer.

It carries out the reaction uridine(38/39/40) in tRNA = pseudouridine(38/39/40) in tRNA. Its function is as follows. Formation of pseudouridine at positions 38, 39 and 40 in the anticodon stem and loop of transfer RNAs. This chain is tRNA pseudouridine synthase A 2, found in Desulfotalea psychrophila (strain LSv54 / DSM 12343).